A 350-amino-acid polypeptide reads, in one-letter code: Transcription factor MYB102 (350 aa).

2 HTH myb-type domains span residues 9-65 (KNGL…RPDI) and 66-116 (KRGR…RKKL). DNA-binding regions (H-T-H motif) lie at residues 37–61 (WRTL…TNYL) and 89–112 (WSAI…NTHI).

As to expression, expressed in rosette leaves, cauline leaves and flowers.

The protein localises to the nucleus. Functionally, probable transcription factor that may function in osmotic stress and wounding signaling pathways. Contributes to basal resistance against the herbivore Pieris rapae (white cabbage butterfly) feeding. The polypeptide is Transcription factor MYB102 (Arabidopsis thaliana (Mouse-ear cress)).